A 367-amino-acid chain; its full sequence is Peptide chain release factor 2 (367 aa).

The residue at position 249 (Gln249) is an N5-methylglutamine.

It belongs to the prokaryotic/mitochondrial release factor family. Post-translationally, methylated by PrmC. Methylation increases the termination efficiency of RF2.

It localises to the cytoplasm. In terms of biological role, peptide chain release factor 2 directs the termination of translation in response to the peptide chain termination codons UGA and UAA. The polypeptide is Peptide chain release factor 2 (Pseudothermotoga lettingae (strain ATCC BAA-301 / DSM 14385 / NBRC 107922 / TMO) (Thermotoga lettingae)).